Consider the following 409-residue polypeptide: Nucleoprotein (409 aa).

Disordered stretches follow at residues 1-31, 44-84, 164-196, and 238-258; these read MASG…GSSG, LNSP…KGGR, RSGR…EDDL, and VDQV…DDKM. Positions 15–31 are enriched in low complexity; sequence PVIKLGGPKPPKVGSSG. Positions 29–160 are RNA-binding; that stretch reads SSGNVSWFQA…GNFRWDFIPL (132 aa). In terms of domain architecture, CoV N NTD spans 31–156; it reads GNVSWFQAIK…GGPDGNFRWD (126 aa). Positions 70–84 are enriched in basic residues; that stretch reads YWRRQARFKPGKGGR. Positions 166–179 are enriched in low complexity; the sequence is GRSTAASSAASSRA. 2 stretches are compositionally biased toward basic and acidic residues: residues 180–192 and 247–258; these read PSRE…RSGS and KGKEGNFGDDKM. Phosphoserine; by host is present on residues Ser190 and Ser192. A CoV N CTD domain is found at 215-331; the sequence is TKAKADEMAH…QCVDGVGTRP (117 aa). The tract at residues 226–333 is dimerization; sequence RYCKRTIPPN…VDGVGTRPKD (108 aa). A disulfide bond links Cys320 and Cys323. The segment at 326–409 is disordered; the sequence is GVGTRPKDDE…GDSALGENEL (84 aa). A compositionally biased stretch (basic residues) spans 358 to 367; that stretch reads QRPKKEKKPK. Residues 368-384 show a composition bias toward basic and acidic residues; that stretch reads KQDDEVDKALTSDEERN. A Phosphothreonine; by host modification is found at Thr378. Phosphoserine; by host is present on Ser379.

It belongs to the gammacoronavirus nucleocapsid protein family. As to quaternary structure, homooligomer. Both monomeric and oligomeric forms interact with RNA. Interacts with protein M. Interacts with NSP3; this interaction serves to tether the genome to the newly translated replicase-transcriptase complex at a very early stage of infection. ADP-ribosylated. The ADP-ribosylation is retained in the virion during infection. In terms of processing, phosphorylated on serine and threonine residues.

Its subcellular location is the virion. The protein resides in the host endoplasmic reticulum-Golgi intermediate compartment. It localises to the host Golgi apparatus. In terms of biological role, packages the positive strand viral genome RNA into a helical ribonucleocapsid (RNP) and plays a fundamental role during virion assembly through its interactions with the viral genome and membrane protein M. Plays an important role in enhancing the efficiency of subgenomic viral RNA transcription as well as viral replication. The chain is Nucleoprotein from Gallus gallus (Chicken).